The primary structure comprises 255 residues: Tabinhibitin 7 (255 aa).

Residues 1-23 form the signal peptide; sequence MTSILVSSFLLATLVLQYATIDA. The short motif at 32-34 is the Cell attachment site element; the sequence is RGD. Positions 67-211 constitute an SCP domain; sequence LSKINDVRDH…KARALLTCNF (145 aa).

This sequence belongs to the CRISP family. As to expression, expressed in salivary glands.

Its subcellular location is the secreted. Its function is as follows. Inhibits platelet aggregation induced by all agonists tested (ADP, arachidonic acid, the thromboxane A2 analog U46619, thrombin, and snake venom snaclecs (TMVA that activates platelet through GPIB, and stejnulxin that specifically acts through GPVI (GP6))). May act by competing with fibrinogen for binding to glycoprotein IIb/IIIa (ITGA2B/ITGB3). The sequence is that of Tabinhibitin 7 from Tabanus yao (Horsefly).